A 103-amino-acid chain; its full sequence is Large ribosomal subunit protein bL21 (103 aa).

This sequence belongs to the bacterial ribosomal protein bL21 family. As to quaternary structure, part of the 50S ribosomal subunit. Contacts protein L20.

Functionally, this protein binds to 23S rRNA in the presence of protein L20. The polypeptide is Large ribosomal subunit protein bL21 (Desulforapulum autotrophicum (strain ATCC 43914 / DSM 3382 / VKM B-1955 / HRM2) (Desulfobacterium autotrophicum)).